The sequence spans 368 residues: Probable deoxyhypusine synthase (368 aa).

NAD(+) contacts are provided by residues 100 to 104 (SNLVS), 126 to 128 (TAG), glutamate 132, and aspartate 233. 131–132 (EE) is a spermidine binding site. Aspartate 238 lines the spermidine pocket. Glycine 278 contacts NAD(+). Histidine 283 is a binding site for spermidine. Residue 303 to 304 (TA) participates in NAD(+) binding. Spermidine is bound by residues 309–311 (GSD) and 318–324 (EAISWGK). Lysine 324 serves as the catalytic Nucleophile. Residue 337 to 338 (EA) participates in NAD(+) binding.

The protein belongs to the deoxyhypusine synthase family. It depends on NAD(+) as a cofactor.

It carries out the reaction [eIF5A protein]-L-lysine + spermidine = [eIF5A protein]-deoxyhypusine + propane-1,3-diamine. The protein operates within protein modification; eIF5A hypusination. Functionally, catalyzes the NAD-dependent oxidative cleavage of spermidine and the subsequent transfer of the butylamine moiety of spermidine to the epsilon-amino group of a specific lysine residue of the eIF-5A precursor protein to form the intermediate deoxyhypusine residue. This chain is Probable deoxyhypusine synthase, found in Drosophila melanogaster (Fruit fly).